A 476-amino-acid chain; its full sequence is UDP-glycosyltransferase 71C3 (476 aa).

UDP-alpha-D-glucose contacts are provided by residues Ser290, 349–351 (APQ), 366–374 (HCGWNSVLE), and 388–391 (YAEQ).

The protein belongs to the UDP-glycosyltransferase family.

Its function is as follows. Possesses low quercetin 3-O-glucosyltransferase activity in vitro. The sequence is that of UDP-glycosyltransferase 71C3 (UGT71C3) from Arabidopsis thaliana (Mouse-ear cress).